A 702-amino-acid chain; its full sequence is Elongation factor G 1 (702 aa).

In terms of domain architecture, tr-type G spans 8-290; the sequence is ERYRNIGISA…AVIDFLPSPV (283 aa). GTP contacts are provided by residues 17 to 24, 88 to 92, and 142 to 145; these read AHIDAGKT, DTPGH, and NKMD.

Belongs to the TRAFAC class translation factor GTPase superfamily. Classic translation factor GTPase family. EF-G/EF-2 subfamily.

Its subcellular location is the cytoplasm. Functionally, catalyzes the GTP-dependent ribosomal translocation step during translation elongation. During this step, the ribosome changes from the pre-translocational (PRE) to the post-translocational (POST) state as the newly formed A-site-bound peptidyl-tRNA and P-site-bound deacylated tRNA move to the P and E sites, respectively. Catalyzes the coordinated movement of the two tRNA molecules, the mRNA and conformational changes in the ribosome. The polypeptide is Elongation factor G 1 (Cupriavidus pinatubonensis (strain JMP 134 / LMG 1197) (Cupriavidus necator (strain JMP 134))).